A 720-amino-acid polypeptide reads, in one-letter code: F-box/LRR-repeat MAX2 homolog (720 aa).

The region spanning 14-60 (SSAILDLPEPLLLHILSFLTDVRSRHRAALACGRMRAAERATRSELS) is the F-box domain. 18 LRR repeats span residues 71 to 134 (LFLS…QNAF), 135 to 158 (IAAR…DPTT), 159 to 189 (LANL…PDGA), 190 to 218 (DLEP…DVVR), 219 to 247 (ALTT…FKSS), 248 to 279 (ELGP…VGDD), 280 to 316 (ALLS…ITVA), 317 to 344 (GLVA…EAAP), 345 to 372 (AMEA…KASW), 373 to 398 (LHLD…LTDA), 399 to 435 (SLAA…TLRP), 436 to 452 (TLKE…HTAE), 453 to 510 (CLTA…KCRY), 511 to 537 (MEFD…LLSP), 538 to 571 (LISA…PRTI), 572 to 606 (FGLS…GQMD), 607 to 644 (LSLW…SLTL), and 645 to 720 (PAVG…QIDD).

As to quaternary structure, associates to a SCF (SKP1-CUL1-F-box protein) E3 ubiquitin-protein ligase complex. Interacts with D14 in a strigolactone-dependent manner. Interacts with SKP1, SKP5 and SKP20. As to expression, expressed in leaves. Expressed in roots, culms, leaf blades, leaf sheaths, shoot bases and panicles.

It localises to the nucleus. Its function is as follows. Involved in strigolactone (SL) signaling. Required for responses to SLs and the establishment of arbuscular mycorrhiza symbiosis in rice. Strigolactone-dependent association of D3 with D14 and D53 (a repressor of SL signaling) triggers D53 ubiquitination and degradation. Controls tillering by suppressing axillary bud activity. Tiller is a specialized grain-bearing branch that is formed on the unelongated basal internode and grows independently of the mother stem (culm) by means of its own adventitious roots. In Oryza sativa subsp. japonica (Rice), this protein is F-box/LRR-repeat MAX2 homolog.